A 198-amino-acid chain; its full sequence is Recombination protein RecR (198 aa).

The C4-type zinc finger occupies 58–73; it reads CSVCGNFTDTDPCAIC. The Toprim domain maps to 81–175; sequence DIICVVEQPK…KVTRIAAGIP (95 aa).

This sequence belongs to the RecR family.

Its function is as follows. May play a role in DNA repair. It seems to be involved in an RecBC-independent recombinational process of DNA repair. It may act with RecF and RecO. The chain is Recombination protein RecR from Clostridium perfringens (strain ATCC 13124 / DSM 756 / JCM 1290 / NCIMB 6125 / NCTC 8237 / Type A).